Consider the following 143-residue polypeptide: Ribosome-binding factor A (143 aa).

Residues 123-143 (DKSLQENYKQNDKETKAEKLR) are disordered.

The protein belongs to the RbfA family. As to quaternary structure, monomer. Binds 30S ribosomal subunits, but not 50S ribosomal subunits or 70S ribosomes.

It localises to the cytoplasm. Its function is as follows. One of several proteins that assist in the late maturation steps of the functional core of the 30S ribosomal subunit. Associates with free 30S ribosomal subunits (but not with 30S subunits that are part of 70S ribosomes or polysomes). Required for efficient processing of 16S rRNA. May interact with the 5'-terminal helix region of 16S rRNA. The polypeptide is Ribosome-binding factor A (Francisella tularensis subsp. novicida (strain U112)).